The chain runs to 238 residues: MADS-box protein 04g005320 (238 aa).

The region spanning 1–61 (MGRGKVELKR…GKLYEFCSTS (61 aa)) is the MADS-box domain. Residues 87 to 177 (SQNNYQEYMK…KTKLEENSVA (91 aa)) enclose the K-box domain.

The protein localises to the nucleus. In terms of biological role, probable MADS-box transcription factor that functions with J2 and EJ2 in meristem maturation. This is MADS-box protein 04g005320 from Solanum lycopersicum (Tomato).